A 265-amino-acid polypeptide reads, in one-letter code: Glutamate racemase (265 aa).

Residues 7-8 and 39-40 contribute to the substrate site; these read DS and YG. The active-site Proton donor/acceptor is the Cys-70. Substrate is bound at residue 71–72; sequence NT. The active-site Proton donor/acceptor is the Cys-177.

Belongs to the aspartate/glutamate racemases family.

The enzyme catalyses L-glutamate = D-glutamate. It functions in the pathway cell wall biogenesis; peptidoglycan biosynthesis. Its function is as follows. Provides the (R)-glutamate required for cell wall biosynthesis. This chain is Glutamate racemase, found in Prochlorococcus marinus (strain NATL1A).